The chain runs to 514 residues: ATP synthase subunit alpha (514 aa).

170–177 (GDRQIGKT) is an ATP binding site.

The protein belongs to the ATPase alpha/beta chains family. In terms of assembly, F-type ATPases have 2 components, CF(1) - the catalytic core - and CF(0) - the membrane proton channel. CF(1) has five subunits: alpha(3), beta(3), gamma(1), delta(1), epsilon(1). CF(0) has three main subunits: a(1), b(2) and c(9-12). The alpha and beta chains form an alternating ring which encloses part of the gamma chain. CF(1) is attached to CF(0) by a central stalk formed by the gamma and epsilon chains, while a peripheral stalk is formed by the delta and b chains.

Its subcellular location is the cell inner membrane. It catalyses the reaction ATP + H2O + 4 H(+)(in) = ADP + phosphate + 5 H(+)(out). Functionally, produces ATP from ADP in the presence of a proton gradient across the membrane. The alpha chain is a regulatory subunit. This Ectopseudomonas mendocina (strain ymp) (Pseudomonas mendocina) protein is ATP synthase subunit alpha.